The sequence spans 371 residues: tRNA-specific 2-thiouridylase MnmA (371 aa).

Residues 14 to 21 (GMSGGVDS) and M40 contribute to the ATP site. Positions 100–102 (NPD) are interaction with target base in tRNA. The active-site Nucleophile is C105. C105 and C201 form a disulfide bridge. Residue G129 participates in ATP binding. An interaction with tRNA region spans residues 151 to 153 (KDQ). The active-site Cysteine persulfide intermediate is C201. The interval 309-310 (RY) is interaction with tRNA.

It belongs to the MnmA/TRMU family.

Its subcellular location is the cytoplasm. The enzyme catalyses S-sulfanyl-L-cysteinyl-[protein] + uridine(34) in tRNA + AH2 + ATP = 2-thiouridine(34) in tRNA + L-cysteinyl-[protein] + A + AMP + diphosphate + H(+). Catalyzes the 2-thiolation of uridine at the wobble position (U34) of tRNA, leading to the formation of s(2)U34. This is tRNA-specific 2-thiouridylase MnmA from Halalkalibacterium halodurans (strain ATCC BAA-125 / DSM 18197 / FERM 7344 / JCM 9153 / C-125) (Bacillus halodurans).